The sequence spans 198 residues: FMN-dependent NADH:quinone oxidoreductase (198 aa).

Residues Ser10, 16–18 (SQS), 94–97 (MYNF), and 138–141 (TRGG) each bind FMN.

Belongs to the azoreductase type 1 family. As to quaternary structure, homodimer. FMN serves as cofactor.

The enzyme catalyses 2 a quinone + NADH + H(+) = 2 a 1,4-benzosemiquinone + NAD(+). It carries out the reaction N,N-dimethyl-1,4-phenylenediamine + anthranilate + 2 NAD(+) = 2-(4-dimethylaminophenyl)diazenylbenzoate + 2 NADH + 2 H(+). Quinone reductase that provides resistance to thiol-specific stress caused by electrophilic quinones. Its function is as follows. Also exhibits azoreductase activity. Catalyzes the reductive cleavage of the azo bond in aromatic azo compounds to the corresponding amines. This is FMN-dependent NADH:quinone oxidoreductase from Shewanella putrefaciens (strain CN-32 / ATCC BAA-453).